The chain runs to 61 residues: MAKKALVNKANKKPKFAVRAYTRCQRCGRPHSVFRKFGLCRICVREMAHAGELPGVRKSSW.

Positions 24, 27, 40, and 43 each coordinate Zn(2+).

It belongs to the universal ribosomal protein uS14 family. Zinc-binding uS14 subfamily. In terms of assembly, part of the 30S ribosomal subunit. Contacts proteins S3 and S10. The cofactor is Zn(2+).

Functionally, binds 16S rRNA, required for the assembly of 30S particles and may also be responsible for determining the conformation of the 16S rRNA at the A site. The polypeptide is Small ribosomal subunit protein uS14 (Rhodococcus erythropolis (strain PR4 / NBRC 100887)).